Consider the following 101-residue polypeptide: Acylphosphatase-1 (101 aa).

At Ser-2 the chain carries N-acetylserine. Ser-2 is modified (N-acetylalanine). In terms of domain architecture, Acylphosphatase-like spans Ser-11–Lys-101. Catalysis depends on residues Arg-26 and Asn-44.

This sequence belongs to the acylphosphatase family. As to expression, organ-common type isozyme is found in many different tissues.

It catalyses the reaction an acyl phosphate + H2O = a carboxylate + phosphate + H(+). This is Acylphosphatase-1 (ACYP1) from Bos taurus (Bovine).